Reading from the N-terminus, the 310-residue chain is Probable manganese-dependent inorganic pyrophosphatase (310 aa).

Residues His10, Asp14, Asp16, Asp75, His97, and Asp149 each contribute to the Mn(2+) site.

The protein belongs to the PPase class C family. Mn(2+) is required as a cofactor.

The protein localises to the cytoplasm. The enzyme catalyses diphosphate + H2O = 2 phosphate + H(+). The sequence is that of Probable manganese-dependent inorganic pyrophosphatase from Clostridium acetobutylicum (strain ATCC 824 / DSM 792 / JCM 1419 / IAM 19013 / LMG 5710 / NBRC 13948 / NRRL B-527 / VKM B-1787 / 2291 / W).